A 130-amino-acid chain; its full sequence is Small ribosomal subunit protein uS9 (130 aa).

This sequence belongs to the universal ribosomal protein uS9 family.

This Edwardsiella ictaluri (strain 93-146) protein is Small ribosomal subunit protein uS9.